A 319-amino-acid chain; its full sequence is Phospho-N-acetylmuramoyl-pentapeptide-transferase (319 aa).

10 helical membrane-spanning segments follow: residues 5–25 (LIPF…FIGF), 51–71 (TMGG…VLIW), 79–99 (TWIL…DDGI), 116–136 (LGQI…HFAF), 149–169 (SFLF…AVNL), 172–192 (GLDG…AWIA), 197–217 (NWVI…FFIF), 224–244 (IFMG…VSIF), 252–272 (LLIG…VISF), and 299–319 (VDIV…IIWG).

The protein belongs to the glycosyltransferase 4 family. MraY subfamily. Requires Mg(2+) as cofactor.

The protein resides in the cell membrane. The catalysed reaction is UDP-N-acetyl-alpha-D-muramoyl-L-alanyl-gamma-D-glutamyl-L-lysyl-D-alanyl-D-alanine + di-trans,octa-cis-undecaprenyl phosphate = Mur2Ac(oyl-L-Ala-gamma-D-Glu-L-Lys-D-Ala-D-Ala)-di-trans,octa-cis-undecaprenyl diphosphate + UMP. It participates in cell wall biogenesis; peptidoglycan biosynthesis. Functionally, catalyzes the initial step of the lipid cycle reactions in the biosynthesis of the cell wall peptidoglycan: transfers peptidoglycan precursor phospho-MurNAc-pentapeptide from UDP-MurNAc-pentapeptide onto the lipid carrier undecaprenyl phosphate, yielding undecaprenyl-pyrophosphoryl-MurNAc-pentapeptide, known as lipid I. The chain is Phospho-N-acetylmuramoyl-pentapeptide-transferase from Lactobacillus gasseri (strain ATCC 33323 / DSM 20243 / BCRC 14619 / CIP 102991 / JCM 1131 / KCTC 3163 / NCIMB 11718 / NCTC 13722 / AM63).